The sequence spans 408 residues: MVKVNADYLKLKAGYLFPEISRRITEFSSKNPNADLIRLGIGDVTEPLPLACREAMKAAIEEMGTKDGFRGYGPEQGYKWLREIISENDYISRGCEISAEEIFVSDGSKCDSSNILDILGKENKIAVTDPVYPVYVDTNVMTGRTGEANSVGEYKGLSYIPINSENGFEASIPKDKFDLIYLCFPNNPTGAVATKEQLVSWVKYAKENNSLILFDAAYEAFIKDESIPHSIFEIEGARDCAIEFRSFSKNAGFTGTRCAFTVIPKSLKGKAGIETVDLWSLWNRRQSTKFNGVSYVVQRGAEAVYSKEGKTQIKKLVSFYMDNAEIIKSNLTAAGFEVFGAVNAPYAWIKTPKDMSSWDFFDFLLEKANVVGTPGSGFGAAGEGYFRLSAFNSRENVEKAMQRIVKLK.

Tyrosine 15 and glycine 42 together coordinate substrate. Pyridoxal 5'-phosphate is bound by residues tyrosine 72, 108–109 (SK), tyrosine 132, asparagine 187, tyrosine 218, and 246–248 (SFS). Substrate contacts are provided by lysine 109, tyrosine 132, and asparagine 187. Lysine 249 is modified (N6-(pyridoxal phosphate)lysine). 2 residues coordinate pyridoxal 5'-phosphate: arginine 257 and asparagine 291. Substrate contacts are provided by asparagine 291 and arginine 387.

The protein belongs to the class-I pyridoxal-phosphate-dependent aminotransferase family. LL-diaminopimelate aminotransferase subfamily. As to quaternary structure, homodimer. Requires pyridoxal 5'-phosphate as cofactor.

The enzyme catalyses (2S,6S)-2,6-diaminopimelate + 2-oxoglutarate = (S)-2,3,4,5-tetrahydrodipicolinate + L-glutamate + H2O + H(+). It participates in amino-acid biosynthesis; L-lysine biosynthesis via DAP pathway; LL-2,6-diaminopimelate from (S)-tetrahydrodipicolinate (aminotransferase route): step 1/1. Involved in the synthesis of meso-diaminopimelate (m-DAP or DL-DAP), required for both lysine and peptidoglycan biosynthesis. Catalyzes the direct conversion of tetrahydrodipicolinate to LL-diaminopimelate. This chain is LL-diaminopimelate aminotransferase, found in Prochlorococcus marinus (strain NATL2A).